Here is a 576-residue protein sequence, read N- to C-terminus: Plant intracellular Ras-group-related LRR protein 4 (576 aa).

Over residues 130 to 151 the composition is skewed to low complexity; sequence AAPAAATTTTSTAAAGSSSSSA. The disordered stretch occupies residues 130 to 181; it reads AAPAAATTTTSTAAAGSSSSSAVGNAERHASSGTNGFTASRVAGTSTSTGRV. A compositionally biased stretch (polar residues) spans 160 to 180; the sequence is SSGTNGFTASRVAGTSTSTGR. LRR repeat units lie at residues 272–295, 296–318, 320–341, 342–364, 366–387, 389–410, 411–433, 434–456, 458–481, 482–503, and 505–527; these read LTGL…IGKL, FSLA…IGDL, SLIY…IGRL, LNLE…IGSL, RLKK…IGHC, SLVE…VGKL, EPLE…MASL, TKLK…FCFA, SLIK…IGNL, EMLE…SFGN, and KHLR…IALK. The short motif at 528 to 535 is the GVYW; degenerate element; the sequence is GAQAVVQY.

Belongs to the SHOC2 family. As to expression, widely expressed.

Leucine-rich repeat protein that likely mediates protein interactions, possibly in the context of signal transduction. The protein is Plant intracellular Ras-group-related LRR protein 4 (IRL4) of Oryza sativa subsp. japonica (Rice).